Here is a 738-residue protein sequence, read N- to C-terminus: Eukaryotic translation initiation factor 3 subunit B (738 aa).

Residues M1–M120 are sufficient for interaction with HCR1 and TIF32. The interval M1 to F245 is sufficient for interaction with PIC8. The 88-residue stretch at N59 to D146 folds into the RRM domain. WD repeat units lie at residues P211–K250, Q322–K360, V363–R406, and V537–R579.

Belongs to the eIF-3 subunit B family. As to quaternary structure, component of the eukaryotic translation initiation factor 3 (eIF-3) complex.

The protein localises to the cytoplasm. Functionally, RNA-binding component of the eukaryotic translation initiation factor 3 (eIF-3) complex, which is involved in protein synthesis of a specialized repertoire of mRNAs and, together with other initiation factors, stimulates binding of mRNA and methionyl-tRNAi to the 40S ribosome. The eIF-3 complex specifically targets and initiates translation of a subset of mRNAs involved in cell proliferation. In Meyerozyma guilliermondii (strain ATCC 6260 / CBS 566 / DSM 6381 / JCM 1539 / NBRC 10279 / NRRL Y-324) (Yeast), this protein is Eukaryotic translation initiation factor 3 subunit B.